The primary structure comprises 176 residues: RNA pyrophosphohydrolase (176 aa).

The Nudix hydrolase domain maps to 6-149; sequence GYRPNVGIVI…KRDVYRRVMK (144 aa). Residues 38–59 carry the Nudix box motif; sequence GGINPGESAEQAMYRELFEEVG.

This sequence belongs to the Nudix hydrolase family. RppH subfamily. The cofactor is a divalent metal cation.

Accelerates the degradation of transcripts by removing pyrophosphate from the 5'-end of triphosphorylated RNA, leading to a more labile monophosphorylated state that can stimulate subsequent ribonuclease cleavage. The protein is RNA pyrophosphohydrolase of Escherichia fergusonii (strain ATCC 35469 / DSM 13698 / CCUG 18766 / IAM 14443 / JCM 21226 / LMG 7866 / NBRC 102419 / NCTC 12128 / CDC 0568-73).